Consider the following 337-residue polypeptide: Large ribosomal subunit protein uL3 (337 aa).

Residues 1–26 form a disordered region; that stretch reads MTRHHQPRKGSVAFSPRKRVARETPR.

This sequence belongs to the universal ribosomal protein uL3 family. Part of the 50S ribosomal subunit. Forms a cluster with proteins L14 and L24e.

Its function is as follows. One of the primary rRNA binding proteins, it binds directly near the 3'-end of the 23S rRNA, where it nucleates assembly of the 50S subunit. The chain is Large ribosomal subunit protein uL3 from Methanosphaera stadtmanae (strain ATCC 43021 / DSM 3091 / JCM 11832 / MCB-3).